A 101-amino-acid polypeptide reads, in one-letter code: Small ribosomal subunit protein uS14 (101 aa).

Belongs to the universal ribosomal protein uS14 family. As to quaternary structure, part of the 30S ribosomal subunit. Contacts proteins S3 and S10.

Its function is as follows. Binds 16S rRNA, required for the assembly of 30S particles and may also be responsible for determining the conformation of the 16S rRNA at the A site. The chain is Small ribosomal subunit protein uS14 from Corynebacterium efficiens (strain DSM 44549 / YS-314 / AJ 12310 / JCM 11189 / NBRC 100395).